Reading from the N-terminus, the 635-residue chain is Biosynthetic arginine decarboxylase (635 aa).

At Lys-100 the chain carries N6-(pyridoxal phosphate)lysine. 282–292 (IDIGGGLGVDY) lines the substrate pocket.

It belongs to the Orn/Lys/Arg decarboxylase class-II family. SpeA subfamily. The cofactor is Mg(2+). Requires pyridoxal 5'-phosphate as cofactor.

It carries out the reaction L-arginine + H(+) = agmatine + CO2. It participates in amine and polyamine biosynthesis; agmatine biosynthesis; agmatine from L-arginine: step 1/1. Its function is as follows. Catalyzes the biosynthesis of agmatine from arginine. The polypeptide is Biosynthetic arginine decarboxylase (Pelobacter propionicus (strain DSM 2379 / NBRC 103807 / OttBd1)).